We begin with the raw amino-acid sequence, 400 residues long: Phosphoglycerate kinase (400 aa).

Substrate-binding positions include 22–24 (DFN), R38, 61–64 (HLGR), R120, and R153. ATP contacts are provided by residues K206, G297, E328, and 354–357 (GGDT).

Belongs to the phosphoglycerate kinase family. Monomer.

Its subcellular location is the cytoplasm. It catalyses the reaction (2R)-3-phosphoglycerate + ATP = (2R)-3-phospho-glyceroyl phosphate + ADP. Its pathway is carbohydrate degradation; glycolysis; pyruvate from D-glyceraldehyde 3-phosphate: step 2/5. In Campylobacter curvus (strain 525.92), this protein is Phosphoglycerate kinase.